A 63-amino-acid polypeptide reads, in one-letter code: Large ribosomal subunit protein uL30 (63 aa).

Belongs to the universal ribosomal protein uL30 family. Part of the 50S ribosomal subunit.

In Coxiella burnetii (strain CbuK_Q154) (Coxiella burnetii (strain Q154)), this protein is Large ribosomal subunit protein uL30.